The sequence spans 195 residues: Granulocyte colony-stimulating factor (195 aa).

An N-terminal signal peptide occupies residues 1–21 (MKLMALQLLLWHIALWMVPEA). 2 cysteine pairs are disulfide-bonded: Cys-57/Cys-63 and Cys-85/Cys-95. A glycan (O-linked (GalNAc...) threonine) is linked at Thr-154.

Belongs to the IL-6 superfamily. Monomer. Post-translationally, O-glycosylated.

Its subcellular location is the secreted. Functionally, granulocyte/macrophage colony-stimulating factors are cytokines that act in hematopoiesis by controlling the production, differentiation, and function of 2 related white cell populations of the blood, the granulocytes and the monocytes-macrophages. This CSF induces granulocytes. The polypeptide is Granulocyte colony-stimulating factor (CSF3) (Sus scrofa (Pig)).